Here is a 378-residue protein sequence, read N- to C-terminus: Cytochrome b (378 aa).

4 helical membrane-spanning segments follow: residues 34 to 54 (FGSL…FLAM), 78 to 99 (WFLR…FIHV), 114 to 134 (WMIG…GYVL), and 179 to 199 (FFTF…IHLL). Heme b-binding residues include His-84 and His-98. His-183 and His-197 together coordinate heme b. His-202 is an a ubiquinone binding site. 4 helical membrane-spanning segments follow: residues 227 to 247 (YKDI…IWKF), 289 to 309 (LGGV…PFTH), 321 to 341 (LNQI…WIGA), and 348 to 368 (YVLT…INPL).

This sequence belongs to the cytochrome b family. The main subunits of complex b-c1 are: cytochrome b, cytochrome c1 and the Rieske protein. Heme b serves as cofactor.

The protein localises to the mitochondrion inner membrane. In terms of biological role, component of the ubiquinol-cytochrome c reductase complex (complex III or cytochrome b-c1 complex) that is part of the mitochondrial respiratory chain. The b-c1 complex mediates electron transfer from ubiquinol to cytochrome c. Contributes to the generation of a proton gradient across the mitochondrial membrane that is then used for ATP synthesis. This is Cytochrome b from Aedes aegypti (Yellowfever mosquito).